The primary structure comprises 205 residues: MNEANSAMSDARRATIERTTGETSVTLTLTIDGSGRADIQTGIGFLDHMLTLWAKHGLFDLTVRAHGDLHVDEHHTAEDVCICLGRALDQALGTRAGIVRTAHSFVPMDEALALVAVDLGGRPYCVMQAEFATPRVGQLGTDLIGHLFESIAFNGRFNLHAQVLYGRNDHHKIEALFKACGRALDAATRYDPRLGGTIPSTKGVL.

Belongs to the imidazoleglycerol-phosphate dehydratase family.

Its subcellular location is the cytoplasm. The catalysed reaction is D-erythro-1-(imidazol-4-yl)glycerol 3-phosphate = 3-(imidazol-4-yl)-2-oxopropyl phosphate + H2O. Its pathway is amino-acid biosynthesis; L-histidine biosynthesis; L-histidine from 5-phospho-alpha-D-ribose 1-diphosphate: step 6/9. The sequence is that of Imidazoleglycerol-phosphate dehydratase from Chloroflexus aggregans (strain MD-66 / DSM 9485).